The sequence spans 245 residues: UPF0280 protein UNCMA_16740 (245 aa).

The protein belongs to the UPF0280 family.

This is UPF0280 protein UNCMA_16740 from Methanocella arvoryzae (strain DSM 22066 / NBRC 105507 / MRE50).